A 300-amino-acid chain; its full sequence is Cation-efflux pump FieF (300 aa).

The next 4 membrane-spanning stretches (helical) occupy residues 12 to 32, 40 to 60, 82 to 102, and 114 to 134; these read AALS…FAWW, LAAL…LFVV, AALA…LTGF, and PGLG…LVTF. Zn(2+) contacts are provided by D45 and D49. H153 and D157 together coordinate Zn(2+). Residues 164 to 184 traverse the membrane as a helical segment; the sequence is ILIALALSWYGFHRADALFAL.

The protein belongs to the cation diffusion facilitator (CDF) transporter (TC 2.A.4) family. FieF subfamily. As to quaternary structure, homodimer.

It is found in the cell inner membrane. The enzyme catalyses Zn(2+)(in) + H(+)(out) = Zn(2+)(out) + H(+)(in). It catalyses the reaction Cd(2+)(in) + H(+)(out) = Cd(2+)(out) + H(+)(in). It carries out the reaction Fe(2+)(in) + H(+)(out) = Fe(2+)(out) + H(+)(in). In terms of biological role, divalent metal cation transporter which exports Zn(2+), Cd(2+) and possibly Fe(2+). May be involved in zinc and iron detoxification by efflux. This Yersinia enterocolitica serotype O:8 / biotype 1B (strain NCTC 13174 / 8081) protein is Cation-efflux pump FieF.